Here is a 201-residue protein sequence, read N- to C-terminus: Female-specific protein transformer (201 aa).

The interval 1–117 (MDADSSSRSP…RSRSRSRTPR (117 aa)) is disordered. The segment covering 9–37 (SPRDTRTCARPKEKVPYFADEGRERDRVR) has biased composition (basic and acidic residues). Composition is skewed to basic residues over residues 38–62 (NLRH…RARS) and 99–115 (KQRR…RSRT).

The protein localises to the nucleus speckle. Member of the regulatory pathway controlling female somatic sexual differentiation, regulated by Sxl. Activates dsx female-specific splicing by promoting the formation of a splicing enhancer complex which consists of tra, tra2 and sr proteins. The chain is Female-specific protein transformer (tra) from Drosophila hydei (Fruit fly).